Reading from the N-terminus, the 307-residue chain is Protoheme IX farnesyltransferase (307 aa).

8 consecutive transmembrane segments (helical) span residues 38–58, 65–85, 108–128, 131–151, 158–178, 186–206, 251–271, and 287–307; these read NTLT…LSVL, FFTI…NNYI, PGFA…FLLL, PMAV…YSLW, LNTV…WAAI, IAWM…LALA, LGIT…VLGF, and FVYS…VTFF.

It belongs to the UbiA prenyltransferase family. Protoheme IX farnesyltransferase subfamily. Interacts with CtaA.

It is found in the cell membrane. It carries out the reaction heme b + (2E,6E)-farnesyl diphosphate + H2O = Fe(II)-heme o + diphosphate. The protein operates within porphyrin-containing compound metabolism; heme O biosynthesis; heme O from protoheme: step 1/1. Functionally, converts heme B (protoheme IX) to heme O by substitution of the vinyl group on carbon 2 of heme B porphyrin ring with a hydroxyethyl farnesyl side group. In Bacillus thuringiensis (strain Al Hakam), this protein is Protoheme IX farnesyltransferase.